Reading from the N-terminus, the 351-residue chain is Ribosomal RNA large subunit methyltransferase M (351 aa).

Residues S186, 219 to 222 (APGG), D238, D258, and D274 contribute to the S-adenosyl-L-methionine site. Catalysis depends on K303, which acts as the Proton acceptor.

This sequence belongs to the class I-like SAM-binding methyltransferase superfamily. RNA methyltransferase RlmE family. RlmM subfamily. In terms of assembly, monomer.

The protein localises to the cytoplasm. It carries out the reaction cytidine(2498) in 23S rRNA + S-adenosyl-L-methionine = 2'-O-methylcytidine(2498) in 23S rRNA + S-adenosyl-L-homocysteine + H(+). Catalyzes the 2'-O-methylation at nucleotide C2498 in 23S rRNA. The protein is Ribosomal RNA large subunit methyltransferase M of Xylella fastidiosa (strain M23).